Reading from the N-terminus, the 790-residue chain is Nitrogen permease reactivator protein (790 aa).

The segment at 1 to 68 (MSSLTRLLQE…DRNRANVPVP (68 aa)) is disordered. Residues 16-38 (TSNSSPRTSADTLTTTPESQSLD) are compositionally biased toward polar residues. Low complexity predominate over residues 46-58 (SSHIGSVSNSSSS). Serine 47 carries the phosphoserine; by autocatalysis modification. 8 positions are modified to phosphoserine: serine 85, serine 90, serine 100, serine 111, serine 116, serine 125, serine 137, and serine 141. Residues 151–175 (RLSTTSHTSGRAIPSLSSSIPYSVP) show a composition bias toward polar residues. Disordered regions lie at residues 151 to 188 (RLSTTSHTSGRAIPSLSSSIPYSVPNSNKDNNSSNSNS) and 234 to 258 (LQKASMDSNNANATQSRSISRSGSF). Low complexity predominate over residues 176 to 188 (NSNKDNNSSNSNS). Over residues 238-248 (SMDSNNANATQ) the composition is skewed to polar residues. The segment covering 249–258 (SRSISRSGSF) has biased composition (low complexity). Serine 257 is subject to Phosphoserine; by autocatalysis. Phosphoserine occurs at positions 259, 260, 288, 292, 317, 320, and 328. A compositionally biased stretch (low complexity) spans 276–289 (NSNSAGMSFSANSN). The interval 276 to 357 (NSNSAGMSFS…QSVPRSQHSS (82 aa)) is disordered. Polar residues-rich tracts occupy residues 290–305 (GPSPNIKNPNVTNGST), 314–339 (RQSSIYSASRQPTGSYTDNFYGSPSS), and 346–357 (PSQSVPRSQHSS). Tyrosine 334 carries the phosphotyrosine modification. A phosphoserine mark is found at serine 336, serine 353, and serine 356. Serine 357 carries the post-translational modification Phosphoserine; by autocatalysis. A Phosphoserine modification is found at serine 385. The 305-residue stretch at 438-742 (IKTGADLGAG…IEEIMEDPWI (305 aa)) folds into the Protein kinase domain. ATP contacts are provided by residues 444–452 (LGAGAGGSV) and lysine 467. The active-site Proton acceptor is aspartate 561. Disordered stretches follow at residues 666–704 (LVTRTPDPPSYDESHSTEKKKPESSSNNVSDPNNVNIGP) and 766–790 (HHTQVDQSEAHIAGLEKKKKKQNNQ). Basic and acidic residues predominate over residues 677-688 (DESHSTEKKKPE). Low complexity predominate over residues 689-701 (SSSNNVSDPNNVN).

It belongs to the protein kinase superfamily. Ser/Thr protein kinase family. In terms of assembly, interacts with TIP41. Post-translationally, hyperphosphorylated in nitrogen-rich growth medium. Nitrogen limitation (or rapamycin treatment) leads to substantial, though not complete dephosphorylation. Autophosphorylation plays only a minor role and seems not to be regulated by the quality of the nitrogen source.

The protein localises to the cytoplasm. The enzyme catalyses L-seryl-[protein] + ATP = O-phospho-L-seryl-[protein] + ADP + H(+). It carries out the reaction L-threonyl-[protein] + ATP = O-phospho-L-threonyl-[protein] + ADP + H(+). Dephosphorylation by SIT4 activates NPR1 kinase activity. Functionally, nutrient-regulated protein kinase that promotes the activity of at least 6 distinct transport systems for nitrogenous nutrients under conditions of nitrogen catabolite derepression. Under poor nitrogen growth conditions, required for post-Golgi sorting of the general amino acid permease GAP1 and the three known ammonia permeases, MEP1/2/3, to the plasma membrane. Also contributes to the stability and the retention of GAP1 at the plasma membrane. Inversely, promotes the degradation of tryptophan permease TAT2 under the same conditions. Activity is regulated by the TOR signaling pathway via phosphatase SIT4. Although thought to be involved in regulation of GLN3-dependent transcription by nitrogen catabolite repression, this seems to be an indirect effect from the reduced uptake of the nitrogen-repressing compound. This is Nitrogen permease reactivator protein (NPR1) from Saccharomyces cerevisiae (strain ATCC 204508 / S288c) (Baker's yeast).